The primary structure comprises 354 residues: S-adenosylmethionine:tRNA ribosyltransferase-isomerase (354 aa).

It belongs to the QueA family. As to quaternary structure, monomer.

The protein localises to the cytoplasm. It catalyses the reaction 7-aminomethyl-7-carbaguanosine(34) in tRNA + S-adenosyl-L-methionine = epoxyqueuosine(34) in tRNA + adenine + L-methionine + 2 H(+). It functions in the pathway tRNA modification; tRNA-queuosine biosynthesis. In terms of biological role, transfers and isomerizes the ribose moiety from AdoMet to the 7-aminomethyl group of 7-deazaguanine (preQ1-tRNA) to give epoxyqueuosine (oQ-tRNA). The polypeptide is S-adenosylmethionine:tRNA ribosyltransferase-isomerase (Pseudomonas fluorescens (strain ATCC BAA-477 / NRRL B-23932 / Pf-5)).